The sequence spans 102 residues: Salivary protein Salp9 (102 aa).

Positions 1–21 are cleaved as a signal peptide; it reads MGLTEIMLVLVSLAFVATAAA. N-linked (GlcNAc...) asparagine glycosylation is found at Asn-26 and Asn-87. The segment at 83–102 is disordered; the sequence is SGVPNDTDAKIEETEEELEA.

The protein belongs to the salp14 family. As to expression, salivary gland (at protein level). Saliva (at protein level). Midgut.

The protein resides in the secreted. Functionally, salivary protein that facilitates blood feeding of adult ticks on vertebrate species. Inhibits the lectin pathway of complement system activation in the host. The protein is Salivary protein Salp9 of Ixodes scapularis (Black-legged tick).